Reading from the N-terminus, the 567-residue chain is Urease subunit alpha 1 (567 aa).

In terms of domain architecture, Urease spans 128-567; the sequence is GAVDTHVHYI…LPLAQLYHLF (440 aa). Ni(2+) contacts are provided by His133, His135, and Lys216. Lys216 is modified (N6-carboxylysine). His218 contacts substrate. Ni(2+) is bound by residues His245 and His271. Catalysis depends on His319, which acts as the Proton donor. Asp359 contributes to the Ni(2+) binding site.

This sequence belongs to the metallo-dependent hydrolases superfamily. Urease alpha subunit family. In terms of assembly, heterotrimer of UreA (gamma), UreB (beta) and UreC (alpha) subunits. Three heterotrimers associate to form the active enzyme. The cofactor is Ni cation. Post-translationally, carboxylation allows a single lysine to coordinate two nickel ions.

The protein localises to the cytoplasm. The enzyme catalyses urea + 2 H2O + H(+) = hydrogencarbonate + 2 NH4(+). It functions in the pathway nitrogen metabolism; urea degradation; CO(2) and NH(3) from urea (urease route): step 1/1. This Psychrobacter cryohalolentis (strain ATCC BAA-1226 / DSM 17306 / VKM B-2378 / K5) protein is Urease subunit alpha 1.